Reading from the N-terminus, the 287-residue chain is Proteasome subunit alpha (287 aa).

Residues 241-287 (GVVAGEEPHTAAHAPSVPQPGAPAGLGDPGAPDTGGTAGSGGEAPTT) form a disordered region. Over residues 262-275 (APAGLGDPGAPDTG) the composition is skewed to low complexity. The span at 276–287 (GTAGSGGEAPTT) shows a compositional bias: gly residues.

Belongs to the peptidase T1A family. The 20S proteasome core is composed of 14 alpha and 14 beta subunits that assemble into four stacked heptameric rings, resulting in a barrel-shaped structure. The two inner rings, each composed of seven catalytic beta subunits, are sandwiched by two outer rings, each composed of seven alpha subunits. The catalytic chamber with the active sites is on the inside of the barrel. Has a gated structure, the ends of the cylinder being occluded by the N-termini of the alpha-subunits. Is capped by the proteasome-associated ATPase, ARC.

The protein localises to the cytoplasm. Its pathway is protein degradation; proteasomal Pup-dependent pathway. The formation of the proteasomal ATPase ARC-20S proteasome complex, likely via the docking of the C-termini of ARC into the intersubunit pockets in the alpha-rings, may trigger opening of the gate for substrate entry. Interconversion between the open-gate and close-gate conformations leads to a dynamic regulation of the 20S proteasome proteolysis activity. Component of the proteasome core, a large protease complex with broad specificity involved in protein degradation. The sequence is that of Proteasome subunit alpha from Geodermatophilus obscurus (strain ATCC 25078 / DSM 43160 / JCM 3152 / CCUG 61914 / KCC A-0152 / KCTC 9177 / NBRC 13315 / NRRL B-3577 / G-20).